We begin with the raw amino-acid sequence, 761 residues long: Ribonucleoside-diphosphate reductase 1 subunit alpha (761 aa).

In terms of domain architecture, ATP-cone spans 5-95; the sequence is LLVTKRDGST…IFHLRKKAYG (91 aa). Residues K9, 15 to 21, T55, and K91 contribute to the ATP site; that span reads ERINLDK. T209 is a GDP binding site. A disulfide bridge links C225 with C462. Residues 232 to 234, R262, and R269 each bind dTTP; that span reads DSL. Position 283 is an N6-acetyllysine (K283). N437 lines the GDP pocket. Catalysis depends on N437, which acts as the Proton acceptor. Residue C439 is the Cysteine radical intermediate of the active site. GDP-binding positions include E441 and 623-625; that span reads ETS. E441 serves as the catalytic Proton acceptor.

Belongs to the ribonucleoside diphosphate reductase large chain family. As to quaternary structure, tetramer of two alpha (R1) and two beta (R2) subunits. The B1 protein is a dimer of alpha subunits. A radical transfer pathway occurs between 'Tyr-122' of R2 and R1. Post-translationally, binding of the substrate occurs primarily when the active-site cysteines are reduced.

It catalyses the reaction a 2'-deoxyribonucleoside 5'-diphosphate + [thioredoxin]-disulfide + H2O = a ribonucleoside 5'-diphosphate + [thioredoxin]-dithiol. Its activity is regulated as follows. Under complex allosteric control mediated by deoxynucleoside triphosphates and ATP binding to separate specificity and activation sites on the alpha subunit. The type of nucleotide bound at the specificity site determines substrate preference. It seems probable that ATP makes the enzyme reduce CDP and UDP, dGTP favors ADP reduction and dTTP favors GDP reduction. Stimulated by ATP and inhibited by dATP binding to the activity site. In vitro, its activity is increased by dithiothreitol (DTT) or thioredoxins (non-specific). Inhibited by hydroxyurea, leads to dNTP depletion, replication fork arrest and genomic instability. Provides the precursors necessary for DNA synthesis. Catalyzes the biosynthesis of deoxyribonucleotides from the corresponding ribonucleotides. R1 contains the binding sites for both substrates and allosteric effectors and carries out the actual reduction of the ribonucleotide. It also provides redox-active cysteines. The chain is Ribonucleoside-diphosphate reductase 1 subunit alpha (nrdA) from Escherichia coli (strain K12).